Here is a 257-residue protein sequence, read N- to C-terminus: 1-(5-phosphoribosyl)-5-[(5-phosphoribosylamino)methylideneamino] imidazole-4-carboxamide isomerase (257 aa).

The active-site Proton acceptor is Asp-8. Asp-129 acts as the Proton donor in catalysis.

It belongs to the HisA/HisF family.

Its subcellular location is the cytoplasm. It carries out the reaction 1-(5-phospho-beta-D-ribosyl)-5-[(5-phospho-beta-D-ribosylamino)methylideneamino]imidazole-4-carboxamide = 5-[(5-phospho-1-deoxy-D-ribulos-1-ylimino)methylamino]-1-(5-phospho-beta-D-ribosyl)imidazole-4-carboxamide. It participates in amino-acid biosynthesis; L-histidine biosynthesis; L-histidine from 5-phospho-alpha-D-ribose 1-diphosphate: step 4/9. This Trichormus variabilis (strain ATCC 29413 / PCC 7937) (Anabaena variabilis) protein is 1-(5-phosphoribosyl)-5-[(5-phosphoribosylamino)methylideneamino] imidazole-4-carboxamide isomerase.